We begin with the raw amino-acid sequence, 468 residues long: Soluble pyridine nucleotide transhydrogenase (468 aa).

36–45 (ERYKNVGGGC) is a binding site for FAD.

Belongs to the class-I pyridine nucleotide-disulfide oxidoreductase family. FAD is required as a cofactor.

Its subcellular location is the cytoplasm. It catalyses the reaction NAD(+) + NADPH = NADH + NADP(+). Functionally, conversion of NADPH, generated by peripheral catabolic pathways, to NADH, which can enter the respiratory chain for energy generation. This chain is Soluble pyridine nucleotide transhydrogenase, found in Hamiltonella defensa subsp. Acyrthosiphon pisum (strain 5AT).